The primary structure comprises 173 residues: Crossover junction endodeoxyribonuclease RuvC (173 aa).

Residues D8, E67, and D139 contribute to the active site. Positions 8, 67, and 139 each coordinate Mg(2+).

The protein belongs to the RuvC family. In terms of assembly, homodimer which binds Holliday junction (HJ) DNA. The HJ becomes 2-fold symmetrical on binding to RuvC with unstacked arms; it has a different conformation from HJ DNA in complex with RuvA. In the full resolvosome a probable DNA-RuvA(4)-RuvB(12)-RuvC(2) complex forms which resolves the HJ. It depends on Mg(2+) as a cofactor.

It localises to the cytoplasm. It catalyses the reaction Endonucleolytic cleavage at a junction such as a reciprocal single-stranded crossover between two homologous DNA duplexes (Holliday junction).. In terms of biological role, the RuvA-RuvB-RuvC complex processes Holliday junction (HJ) DNA during genetic recombination and DNA repair. Endonuclease that resolves HJ intermediates. Cleaves cruciform DNA by making single-stranded nicks across the HJ at symmetrical positions within the homologous arms, yielding a 5'-phosphate and a 3'-hydroxyl group; requires a central core of homology in the junction. The consensus cleavage sequence is 5'-(A/T)TT(C/G)-3'. Cleavage occurs on the 3'-side of the TT dinucleotide at the point of strand exchange. HJ branch migration catalyzed by RuvA-RuvB allows RuvC to scan DNA until it finds its consensus sequence, where it cleaves and resolves the cruciform DNA. The polypeptide is Crossover junction endodeoxyribonuclease RuvC (Photorhabdus laumondii subsp. laumondii (strain DSM 15139 / CIP 105565 / TT01) (Photorhabdus luminescens subsp. laumondii)).